Consider the following 270-residue polypeptide: Phosphatidylglycerol--prolipoprotein diacylglyceryl transferase (270 aa).

Helical transmembrane passes span 10 to 30 (VAVA…LVGI), 56 to 76 (LIFW…VLFY), 92 to 112 (WKGG…AWWF), 120 to 140 (FFQL…AGRI), 175 to 195 (SQLY…NLYA), 202 to 222 (MAVS…VEFV), and 237 to 257 (VTMG…LIWL). Arginine 139 is an a 1,2-diacyl-sn-glycero-3-phospho-(1'-sn-glycerol) binding site.

Belongs to the Lgt family.

It localises to the cell inner membrane. The catalysed reaction is L-cysteinyl-[prolipoprotein] + a 1,2-diacyl-sn-glycero-3-phospho-(1'-sn-glycerol) = an S-1,2-diacyl-sn-glyceryl-L-cysteinyl-[prolipoprotein] + sn-glycerol 1-phosphate + H(+). It participates in protein modification; lipoprotein biosynthesis (diacylglyceryl transfer). Catalyzes the transfer of the diacylglyceryl group from phosphatidylglycerol to the sulfhydryl group of the N-terminal cysteine of a prolipoprotein, the first step in the formation of mature lipoproteins. The chain is Phosphatidylglycerol--prolipoprotein diacylglyceryl transferase from Pseudomonas syringae pv. tomato (strain ATCC BAA-871 / DC3000).